A 64-amino-acid polypeptide reads, in one-letter code: DNA gyrase inhibitor YacG (64 aa).

Positions 7, 10, 26, and 30 each coordinate Zn(2+). Residues 44 to 64 are disordered; sequence RIPGEIDPELLPYPEEGEQWQ.

This sequence belongs to the DNA gyrase inhibitor YacG family. In terms of assembly, interacts with GyrB. The cofactor is Zn(2+).

Inhibits all the catalytic activities of DNA gyrase by preventing its interaction with DNA. Acts by binding directly to the C-terminal domain of GyrB, which probably disrupts DNA binding by the gyrase. The polypeptide is DNA gyrase inhibitor YacG (Aeromonas hydrophila subsp. hydrophila (strain ATCC 7966 / DSM 30187 / BCRC 13018 / CCUG 14551 / JCM 1027 / KCTC 2358 / NCIMB 9240 / NCTC 8049)).